A 369-amino-acid chain; its full sequence is uncharacterized protein (369 aa).

9 helical membrane passes run 25–45, 47–67, 119–139, 152–172, 206–226, 235–255, 272–292, 296–316, and 323–343; these read QFVALSIWIILITLFSLWYDW, FCLLNLTIVGFFIAFCYFVPA, LNIVHLFVISGFHLSFLFNLM, LSGFAVLLIYLFLVGFAFSAL, HALNNFGFNFSFLACFVLLFV, LKPLVSSSLILIVISPLSLYL, PIALFYFCVSWIILPFIGVFG, FGIYLPLKMLSEWSLKVTVFL, and LIFFFVYYGLLGLLYTIFTVA.

This sequence to B.subtilis ComEC.

The protein localises to the cell membrane. This is an uncharacterized protein from Mycoplasma genitalium (strain ATCC 33530 / DSM 19775 / NCTC 10195 / G37) (Mycoplasmoides genitalium).